A 230-amino-acid chain; its full sequence is Probable methylthioribulose-1-phosphate dehydratase (230 aa).

Residue cysteine 87 coordinates substrate. Zn(2+) contacts are provided by histidine 105 and histidine 107. The active-site Proton donor/acceptor is glutamate 129. Position 185 (histidine 185) interacts with Zn(2+).

Belongs to the aldolase class II family. MtnB subfamily. Requires Zn(2+) as cofactor.

It localises to the cytoplasm. It catalyses the reaction 5-(methylsulfanyl)-D-ribulose 1-phosphate = 5-methylsulfanyl-2,3-dioxopentyl phosphate + H2O. It functions in the pathway amino-acid biosynthesis; L-methionine biosynthesis via salvage pathway; L-methionine from S-methyl-5-thio-alpha-D-ribose 1-phosphate: step 2/6. Functionally, catalyzes the dehydration of methylthioribulose-1-phosphate (MTRu-1-P) into 2,3-diketo-5-methylthiopentyl-1-phosphate (DK-MTP-1-P). The polypeptide is Probable methylthioribulose-1-phosphate dehydratase (Drosophila grimshawi (Hawaiian fruit fly)).